Here is a 63-residue protein sequence, read N- to C-terminus: Large ribosomal subunit protein bL32 (63 aa).

2 disordered regions span residues 1 to 25 (MAVP…LTTP) and 42 to 63 (VSPK…QNND). A compositionally biased stretch (basic residues) spans 7 to 20 (KTSKQKKRSRRGHI). Residues 54–63 (ANENKQQNND) show a composition bias toward polar residues.

It belongs to the bacterial ribosomal protein bL32 family.

This is Large ribosomal subunit protein bL32 from Lactobacillus johnsonii (strain CNCM I-12250 / La1 / NCC 533).